Here is a 475-residue protein sequence, read N- to C-terminus: Argininosuccinate lyase (475 aa).

Belongs to the lyase 1 family. Argininosuccinate lyase subfamily.

It is found in the cytoplasm. It carries out the reaction 2-(N(omega)-L-arginino)succinate = fumarate + L-arginine. It participates in amino-acid biosynthesis; L-arginine biosynthesis; L-arginine from L-ornithine and carbamoyl phosphate: step 3/3. The sequence is that of Argininosuccinate lyase from Streptomyces coelicolor (strain ATCC BAA-471 / A3(2) / M145).